The sequence spans 788 residues: Spastin (788 aa).

The interval 1-105 (MVRTKNQSSS…PRSAGGPSSV (105 aa)) is disordered. The Cytoplasmic segment spans residues 1 to 116 (MVRTKNQSSS…KQNLYVVSFP (116 aa)). The tract at residues 1 to 227 (MVRTKNQSSS…NRSGSGYSPG (227 aa)) is required for localization to punctate cytoplasmic foci. 2 stretches are compositionally biased toward low complexity: residues 8–48 (SSSS…SSHR) and 57–75 (ATNV…SSPD). The segment at residues 117-137 (IIFLFNVLRSLIYQLFCIFRY) is an intramembrane region (helical). Residues 138-788 (LYGASTKVIY…WSSDYGDITI (651 aa)) lie on the Cytoplasmic side of the membrane. The interval 227–788 (GPGDPLLAKQ…WSSDYGDITI (562 aa)) is sufficient for interaction with microtubules and microtubule severing. One can recognise an MIT domain in the interval 240 to 315 (HRRAFEYISK…SMARDRLHFL (76 aa)). A compositionally biased stretch (basic and acidic residues) spans 330–353 (KEEQKPNPSREQHQKPQKAREAAD). The tract at residues 330-484 (KEEQKPNPSR…SGSGSGASTP (155 aa)) is disordered. Positions 380-400 (LTTPRISATATTPTSSSSLAS) are enriched in low complexity. 2 stretches are compositionally biased toward polar residues: residues 419–433 (NKSQ…SKTS) and 453–469 (QFSS…RTPI). The interval 471–485 (NNGASGSGSGASTPV) is required for interaction with microtubules. 553–560 (GPPGNGKT) provides a ligand contact to ATP.

The protein belongs to the AAA ATPase family. Spastin subfamily. As to quaternary structure, homohexamer. The homohexamer is stabilized by ATP-binding. The homohexamer may adopt a ring conformation through which microtubules pass prior to being severed. Interacts with microtubules. Interacts with atl; may be involved in microtubule dynamics.

It localises to the membrane. It is found in the cytoplasm. The protein localises to the cytoskeleton. Its subcellular location is the microtubule organizing center. The protein resides in the centrosome. It localises to the chromosome. It is found in the lipid droplet. The catalysed reaction is n ATP + n H2O + a microtubule = n ADP + n phosphate + (n+1) alpha/beta tubulin heterodimers.. In terms of biological role, ATP-dependent microtubule severing protein. Stimulates microtubule minus-end depolymerization and poleward microtubule flux in the mitotic spindle. Regulates microtubule stability in the neuromuscular junction synapse. Involved in lipid metabolism by regulating the size and distribution of lipid droplets. Involved in axon regeneration by regulating microtubule severing. This is Spastin from Drosophila pseudoobscura pseudoobscura (Fruit fly).